A 339-amino-acid chain; its full sequence is Serpentine receptor class alpha-22 (339 aa).

6 consecutive transmembrane segments (helical) span residues 33-53 (IFIS…IQAL), 110-130 (VVDL…VFSL), 150-170 (FIAI…FYIA), 199-219 (VRTM…YLSV), 250-270 (IFII…NLLL), and 284-304 (IALF…VIYF).

This sequence belongs to the nematode receptor-like protein sra family.

The protein resides in the membrane. This Caenorhabditis elegans protein is Serpentine receptor class alpha-22 (sra-22).